The sequence spans 520 residues: GMP synthase [glutamine-hydrolyzing] (520 aa).

The 198-residue stretch at 3 to 200 (AIAIIDFGSQ…FLDIANCKRD (198 aa)) folds into the Glutamine amidotransferase type-1 domain. Residue Cys84 is the Nucleophile of the active site. Residues His175 and Glu177 contribute to the active site. The GMPS ATP-PPase domain maps to 201-386 (WTMKSIIEKQ…IGLSNEIIFQ (186 aa)). 228-234 (SGGVDSS) lines the ATP pocket.

As to quaternary structure, homodimer.

It catalyses the reaction XMP + L-glutamine + ATP + H2O = GMP + L-glutamate + AMP + diphosphate + 2 H(+). It participates in purine metabolism; GMP biosynthesis; GMP from XMP (L-Gln route): step 1/1. In terms of biological role, catalyzes the synthesis of GMP from XMP. In Wolbachia sp. subsp. Brugia malayi (strain TRS), this protein is GMP synthase [glutamine-hydrolyzing].